The primary structure comprises 88 residues: uncharacterized protein (88 aa).

This is an uncharacterized protein from Mycobacterium tuberculosis (strain CDC 1551 / Oshkosh).